The primary structure comprises 2513 residues: Polyprotein P1234 (2513 aa).

The Alphavirus-like MT domain maps to 30-260 (VAQQVTPNDH…EHRASLQSWH (231 aa)). Positions 245 to 264 (GSTLYPEHRASLQSWHLPSV) are nsP1 membrane-binding. The S-palmitoyl cysteine; by host moiety is linked to residue Cys-420. The 156-residue stretch at 695–850 (ELTNPPYHEL…KDICTKTFYK (156 aa)) folds into the (+)RNA virus helicase ATP-binding domain. An a ribonucleoside 5'-triphosphate-binding site is contributed by 726-733 (GTPGSGKS). The region spanning 851-999 (YISRRCTQPV…IEDWEAEHKG (149 aa)) is the (+)RNA virus helicase C-terminal domain. The Peptidase C9 domain maps to 1012 to 1341 (NPFSCKTNVC…CVISSVYEGT (330 aa)). The nucleolus localization signal stretch occupies residues 1013-1032 (PFSCKTNVCWAKALEPILAT). Residue Cys-1021 is the For cysteine protease nsP2 activity of the active site. The Nuclear export signal signature appears at 1066–1075 (IKFFGMDLTS). The active-site For cysteine protease nsP2 activity is the His-1098. The short motif at 1196–1200 (PRKRI) is the Nuclear localization signal element. The region spanning 1348–1507 (APSYRTKREN…RIDAALQLKE (160 aa)) is the Macro domain. 5 residues coordinate ADP-D-ribose: Asn-1371, Gly-1379, Gly-1459, Ile-1460, and Tyr-1461. Zn(2+)-binding residues include Cys-1610, Cys-1612, Cys-1635, and Cys-1653. A compositionally biased stretch (low complexity) spans 1679-1696 (PTAPPAQAEEAPEVVATP). Residues 1679-1705 (PTAPPAQAEEAPEVVATPSPSTADNTS) form a disordered region. 2 consecutive short sequence motifs (FGDF; binding to host G3BP1) follow at residues 1837–1840 (FGSF) and 1860–1863 (FGSF). A RdRp catalytic domain is found at 2267 to 2382 (DPVLETDIAS…HGVVSDKEMA (116 aa)).

In terms of assembly, interacts with non-structural protein 3. Interacts with RNA-directed RNA polymerase nsP4. Interacts with protease nsP2. interacts with itself. Interacts with host TMEM45B; this interaction leads to viral replication inhibition. As to quaternary structure, interacts with mRNA-capping enzyme nsP1. Interacts with host DDX1. Interacts with host DDX3. Interacts (via C-terminus) with host G3BP1; this interaction inhibits the formation of host stress granules on viral mRNAs and the nsp3-G3BP1 complexes bind viral RNAs and probably orchestrate the assembly of viral replication complexes. Interacts (via C-terminus) with host G3BP2; this interaction inhibits the formation of host stress granules on viral mRNAs and the nsp3-G3BP2 complexes bind viral RNAs and probably orchestrate the assembly of viral replication complexes. Interacts with mRNA-capping enzyme nsP1. Interacts with protease nsP2. interacts with itself. Interacts with host TMEM45B; this interaction leads to viral replication inhibition. In terms of assembly, interacts with RNA-directed RNA polymerase nsP4. Interacts with mRNA-capping enzyme nsP1. Interacts with KPNA1/karyopherin-alpha1; this interaction probably allows the active transport of protease nsP2 into the host nucleus. Requires Mg(2+) as cofactor. Mn(2+) serves as cofactor. In terms of processing, specific enzymatic cleavages in vivo yield mature proteins. The processing of the polyprotein is temporally regulated. In early stages (1.7 hpi), P1234 is first cleaved in trans through its nsP2 protease activity, releasing P123' and nsP4, which associate to form the early replication complex. At the same time, P1234 is also cut at the nsP1/nsP2 site early in infection but with lower efficiency. After replication of the viral minus-strand RNAs (4 hpi), the polyproteins are cut at the nsP1/nsP2 and nsP2/nsP3 sites very efficiently, preventing accumulation of P123' and P1234 and allowing the formation of the late replication complex. NsP3'/nsP4 site is not cleaved anymore and P34 is produced rather than nsP4. Post-translationally, specific enzymatic cleavages in vivo yield mature proteins. The processing of the polyprotein is temporally regulated. In early stages (1.7 hpi), P123 is cleaved at the nsP1/nsP2 site with low efficiency. After replication of the viral minus-strand RNAs (4 hpi), the polyproteins are cut at the nsP1/nsP2 and nsP2/nsP3 sites very efficiently, preventing accumulation of P123 and allowing the formation of the late replication complex. Specific enzymatic cleavages in vivo yield mature proteins. The processing of the polyprotein is temporally regulated. In early stages (1.7 hpi), P123' is cleaved at the nsP1/nsP2 site with low efficiency. After replication of the viral minus-strand RNAs (4 hpi), the polyproteins are cut at the nsP1/nsP2 and nsP2/nsP3 sites very efficiently, preventing accumulation of P123' and allowing the formation of the late replication complex. In terms of processing, palmitoylated by host palmitoyltransferases ZDHHC2 and ZDHHC19. Post-translationally, phosphorylated by host on serines and threonines. Ubiquitinated; targets the protein for rapid degradation via the ubiquitin system. Nsp4 is present in extremely low quantities due to low frequency of translation through the amber stop-codon and the degradation by the ubiquitin pathway.

The protein localises to the host cytoplasmic vesicle membrane. Its subcellular location is the host cell membrane. It is found in the host cell projection. It localises to the host filopodium. The protein resides in the host nucleus. The protein localises to the host cytoplasm. The enzyme catalyses GTP + S-adenosyl-L-methionine = N(7)-methyl-GTP + S-adenosyl-L-homocysteine. The catalysed reaction is N(7)-methyl-GTP + L-histidyl-[protein] = N(tele)-(N(7)-methylguanosine 5'-phospho)-L-histidyl-[protein] + diphosphate. It catalyses the reaction N(tele)-(N(7)-methylguanosine 5'-phospho)-L-histidyl-[protein] + a 5'-end diphospho-(purine-ribonucleoside) in mRNA + H(+) = a 5'-end (N(7)-methyl 5'-triphosphoguanosine)-(purine-ribonucleoside) in mRNA + L-histidyl-[protein]. It carries out the reaction a 5'-end triphospho-ribonucleoside in mRNA + H2O = a 5'-end diphospho-ribonucleoside in mRNA + phosphate + H(+). The enzyme catalyses a ribonucleoside 5'-triphosphate + H2O = a ribonucleoside 5'-diphosphate + phosphate + H(+). The catalysed reaction is ATP + H2O = ADP + phosphate + H(+). It catalyses the reaction RNA(n) + a ribonucleoside 5'-triphosphate = RNA(n+1) + diphosphate. It carries out the reaction RNA(n) + ATP = RNA(n)-3'-adenine ribonucleotide + diphosphate. The enzyme catalyses 4-O-(ADP-D-ribosyl)-L-aspartyl-[protein] + H2O = L-aspartyl-[protein] + ADP-D-ribose + H(+). The catalysed reaction is 5-O-(ADP-D-ribosyl)-L-glutamyl-[protein] + H2O = L-glutamyl-[protein] + ADP-D-ribose + H(+). It catalyses the reaction ADP-alpha-D-ribose 1''-phosphate + H2O = ADP-D-ribose + phosphate. Inactive precursor of the viral replicase, which is activated by cleavages carried out by the viral protease nsP2. Its function is as follows. The early replication complex formed by the polyprotein P123 and nsP4 synthesizes minus-strand RNAs. Polyprotein P123 is a short-lived polyprotein that accumulates during early stage of infection. As soon P123 is cleaved into mature proteins, the plus-strand RNAs synthesis begins. In terms of biological role, the early replication complex formed by the polyprotein P123' and nsP4 synthesizes minus-strand RNAs. Polyprotein P123' is a short-lived polyprotein that accumulates during early stage of infection. As soon P123' is cleaved into mature proteins, the plus-strand RNAs synthesis begins. Functionally, cytoplasmic capping enzyme that catalyzes two virus-specific reactions: methyltransferase and nsP1 guanylyltransferase. mRNA-capping is necessary since all viral RNAs are synthesized in the cytoplasm, and host capping enzymes are restricted to the nucleus. The enzymatic reaction involves a covalent link between 7-methyl-GMP and nsP1, whereas eukaryotic capping enzymes form a covalent complex only with GMP. nsP1 capping consists in the following reactions: GTP is first methylated into 7-methyl-GMP and then is covalently linked to nsP1 to form the m7GMp-nsP1 complex from which 7-methyl-GMP complex is transferred to the mRNA to create the cap structure. NsP1 is needed for the initiation of the minus-strand RNAs synthesis. Probably serves as a membrane anchor for the replication complex composed of nsP1-nsP4. Palmitoylated nsP1 is remodeling host cell cytoskeleton, and induces filopodium-like structure formation at the surface of the host cell. Multifunctional protein whose N-terminus is part of the RNA polymerase complex and displays NTPase, RNA triphosphatase and helicase activities. NTPase and RNA triphosphatase are involved in viral RNA capping and helicase keeps a check on the dsRNA replication intermediates. The C-terminus harbors a protease that specifically cleaves the polyproteins and releases the mature proteins. Required for the shutoff of minus-strand RNAs synthesis. Specifically inhibits the host IFN response by promoting the nuclear export of host STAT1. Also inhibits host transcription by inducing rapid proteasome-dependent degradation of POLR2A, a catalytic subunit of the RNAPII complex. The resulting inhibition of cellular protein synthesis serves to ensure maximal viral gene expression and to evade host immune response. Its function is as follows. Seems to be essential for minus-strand RNAs and subgenomic 26S mRNAs synthesis. Displays mono-ADP-ribosylhydrolase activity. ADP-ribosylation is a post-translantional modification that controls various processes of the host cell and the virus probably needs to revert it for optimal viral replication. Binds proteins of G3BP family and sequesters them into the viral RNA replication complexes thereby inhibiting the formation of host stress granules on viral mRNAs. The nsp3-G3BP complexes bind viral RNAs and probably orchestrate the assembly of viral replication complexes, thanks to the ability of G3BP family members to self-assemble and bind DNA. In terms of biological role, seems to be essential for minus-strand RNAs and subgenomic 26S mRNAs synthesis. Displays mono-ADP-ribosylhydrolase activity. ADP-ribosylation is a post-translational modification that controls various processes of the host cell and the virus probably needs to revert it for optimal viral replication. Binds proteins of G3BP family and sequesters them into the viral RNA replication complexes thereby inhibiting the formation of host stress granules on viral mRNAs. The nsp3'-G3BP complexes bind viral RNAs and probably orchestrate the assembly of viral replication complexes, thanks to the ability of G3BP family members to self-assemble and bind DNA. Functionally, RNA dependent RNA polymerase. Replicates genomic and antigenomic RNA by recognizing replications specific signals. The early replication complex formed by the polyprotein P123 and nsP4 synthesizes minus-strand RNAs. The late replication complex composed of fully processed nsP1-nsP4 is responsible for the production of genomic and subgenomic plus-strand RNAs. The core catalytic domain of nsP4 also possesses terminal adenylyltransferase (TATase) activity that is probably involved in maintenance and repair of the poly(A) tail, an element required for replication of the viral genome. The polypeptide is Polyprotein P1234 (Acrocephalus scirpaceus (Eurasian reed-warbler)).